Consider the following 279-residue polypeptide: Nitrate import permease protein NrtB (279 aa).

The next 5 helical transmembrane spans lie at 25 to 45 (FLPY…ISAI), 91 to 111 (VAIG…VLGM), 149 to 169 (AIFV…AVGI), 200 to 220 (VPYV…AIVA), and 249 to 269 (IILA…LVAW). Residues 84–267 (ILISLQRVAI…LVGLSLDRLV (184 aa)) form the ABC transmembrane type-1 domain.

Belongs to the binding-protein-dependent transport system permease family. CysTW subfamily. As to quaternary structure, the complex is composed of two ATP-binding proteins (NrtC and NrtD), two transmembrane proteins (NrtB) and a solute-binding protein (NrtA).

The protein resides in the cell inner membrane. Its function is as follows. Part of the ABC transporter complex NrtABCD involved in nitrate uptake. The complex is probably also involved in nitrite transport. Probably responsible for the translocation of the substrate across the membrane. The protein is Nitrate import permease protein NrtB of Synechococcus elongatus (strain ATCC 33912 / PCC 7942 / FACHB-805) (Anacystis nidulans R2).